The chain runs to 130 residues: Large ribosomal subunit protein bL12 (130 aa).

Belongs to the bacterial ribosomal protein bL12 family. As to quaternary structure, homodimer. Part of the ribosomal stalk of the 50S ribosomal subunit. Forms a multimeric L10(L12)X complex, where L10 forms an elongated spine to which 2 to 4 L12 dimers bind in a sequential fashion. Binds GTP-bound translation factors.

In terms of biological role, forms part of the ribosomal stalk which helps the ribosome interact with GTP-bound translation factors. Is thus essential for accurate translation. The protein is Large ribosomal subunit protein bL12 of Synechococcus sp. (strain WH7803).